A 527-amino-acid polypeptide reads, in one-letter code: ATP synthase subunit alpha (527 aa).

169 to 176 (GDRQTGKT) contributes to the ATP binding site.

Belongs to the ATPase alpha/beta chains family. In terms of assembly, F-type ATPases have 2 components, CF(1) - the catalytic core - and CF(0) - the membrane proton channel. CF(1) has five subunits: alpha(3), beta(3), gamma(1), delta(1), epsilon(1). CF(0) has three main subunits: a(1), b(2) and c(9-12). The alpha and beta chains form an alternating ring which encloses part of the gamma chain. CF(1) is attached to CF(0) by a central stalk formed by the gamma and epsilon chains, while a peripheral stalk is formed by the delta and b chains.

The protein resides in the cell membrane. It carries out the reaction ATP + H2O + 4 H(+)(in) = ADP + phosphate + 5 H(+)(out). In terms of biological role, produces ATP from ADP in the presence of a proton gradient across the membrane. The alpha chain is a regulatory subunit. This Metamycoplasma arthritidis (strain 158L3-1) (Mycoplasma arthritidis) protein is ATP synthase subunit alpha.